The sequence spans 351 residues: MKKLRKRKMSTYLSDYDYFLPEELIGQKPREPRDSAKLMLIDRKNGSVEHKNFYNIIDYLQKGDILVRNATKVIPARIFGHKDTGGVLEILLIKRITLDTWECLLKPAKKLKLGQKLYIGENKELIAELLEIKEDGNRILKFYYEGSFEEILDKLGSMPLPPYITRKLENKDRYQTVYAQRGESVAAPTAGLHFTEELLNKILDKGVEIVDIFLEVGLGTFRPVQTVNVLEHKMHEESFEISEKVAKIINEAKAEGRRIISVGTTATRALESSVDENGKLIAQKKDTGIFIYPGYKFKIVDALITNFHLPKSTLLMLVSAFYDREKMLEIYNLAVKEKYHFFSFGDSMFIY.

This sequence belongs to the QueA family. Monomer.

It localises to the cytoplasm. It carries out the reaction 7-aminomethyl-7-carbaguanosine(34) in tRNA + S-adenosyl-L-methionine = epoxyqueuosine(34) in tRNA + adenine + L-methionine + 2 H(+). It functions in the pathway tRNA modification; tRNA-queuosine biosynthesis. Transfers and isomerizes the ribose moiety from AdoMet to the 7-aminomethyl group of 7-deazaguanine (preQ1-tRNA) to give epoxyqueuosine (oQ-tRNA). The chain is S-adenosylmethionine:tRNA ribosyltransferase-isomerase from Fusobacterium nucleatum subsp. nucleatum (strain ATCC 25586 / DSM 15643 / BCRC 10681 / CIP 101130 / JCM 8532 / KCTC 2640 / LMG 13131 / VPI 4355).